We begin with the raw amino-acid sequence, 860 residues long: Leucine--tRNA ligase (860 aa).

A 'HIGH' region motif is present at residues 42-52 (PYPSGRLHMGH). Residues 619–623 (KMSKS) carry the 'KMSKS' region motif. ATP is bound at residue Lys-622.

This sequence belongs to the class-I aminoacyl-tRNA synthetase family.

It is found in the cytoplasm. It catalyses the reaction tRNA(Leu) + L-leucine + ATP = L-leucyl-tRNA(Leu) + AMP + diphosphate. The polypeptide is Leucine--tRNA ligase (Escherichia coli O7:K1 (strain IAI39 / ExPEC)).